Reading from the N-terminus, the 319-residue chain is uncharacterized protein (319 aa).

Helical transmembrane passes span 11 to 31 (GLWAGFIAFVIAMLALDLGVF), 43 to 63 (ALGWSALWVSLALVFGAGVWW), 83 to 103 (LSVDNIFVFVVIFSALRIPAL), 108 to 128 (VLFWGILSALALRAIMIFAGV), 134 to 154 (FHWLIYVFGGFLIITGVKLFL), 195 to 215 (LATPLLMALLLVEASDILFAL), 220 to 240 (AIFAVTTDPFIVFTSNIFAIL), 260 to 280 (KVGLSAVLVFVGTKMAIIDFV), and 284 to 304 (PEVSLSVIAGLLGASIVASLI).

The protein belongs to the TerC family.

The protein localises to the cell membrane. This is an uncharacterized protein from Myxococcus xanthus.